The chain runs to 148 residues: Arginine repressor (148 aa).

The protein belongs to the ArgR family.

It is found in the cytoplasm. It functions in the pathway amino-acid biosynthesis; L-arginine biosynthesis [regulation]. Regulates arginine biosynthesis genes. This Pelodictyon phaeoclathratiforme (strain DSM 5477 / BU-1) protein is Arginine repressor.